Here is a 97-residue protein sequence, read N- to C-terminus: Putative septation protein SpoVG (97 aa).

The protein belongs to the SpoVG family.

Could be involved in septation. This Anaeromyxobacter sp. (strain Fw109-5) protein is Putative septation protein SpoVG.